Consider the following 120-residue polypeptide: MSSTSEPTYQLAPPDSLKQVYLTLAAGFAVGLGIFLLRTNTLPHTGDNIHHLPHGGCYRDGTKSIRYNSPGVATSSNIFLPAVAVLCILALLHVPFFQPDRVRRRCCRFYWCADPHHPTV.

The Cytoplasmic portion of the chain corresponds to 1–16 (MSSTSEPTYQLAPPDS). Residues 17 to 37 (LKQVYLTLAAGFAVGLGIFLL) form a helical membrane-spanning segment. At 38-76 (RTNTLPHTGDNIHHLPHGGCYRDGTKSIRYNSPGVATSS) the chain is on the lumenal side. The helical transmembrane segment at 77–97 (NIFLPAVAVLCILALLHVPFF) threads the bilayer. The Cytoplasmic portion of the chain corresponds to 98 to 120 (QPDRVRRRCCRFYWCADPHHPTV).

This sequence belongs to the Tymovirales TGBp2 protein family.

The protein resides in the host endoplasmic reticulum membrane. Its function is as follows. Plays a role in viral cell-to-cell propagation, by facilitating genome transport to neighboring plant cells through plasmosdesmata,. This is Movement protein TGB2 (ORF3) from Lolium latent virus (isolate Lolium/USA/US1/-) (LoLV).